The following is a 435-amino-acid chain: MLDIQLLRKDIDAVAQRLATRGFQLDVALFQALEAERKQLQTQTEDLQARRNSLSKQIGMLKGKGEDASGPMAEVAGIGDTLKASAQRLAEIQDQISDAMLSIPNLPHESVPTGKDETENVEVRRVGTPRTFDFEIKDHVDVGARLGLDFETATKVTGSRFAFLRGGVARMHRALVQLMVDTHTLEHGYTEMYVPYIVNAASMRGTGQLPKFEDDLFKVPRKVGGEDGQDAIENFYLIPTAEVPLTNVVRDAIVAAEKLPLRFVAHTPCFRSEAGSYGKDTRGMIRQHQFDKVEMVQVVPSEQSMDALEQMTGHAETILKKLELPFRTVVLCTGDMGFGSTKTYDIEVWIPAQNTYREISSCSSMGDFQARRMQARMRAGQGKPELVHTLNGSGLAVGRTLVAILENYQNADGSVTVPKALQPYMGGITRLEPEA.

240 to 242 contacts L-serine; sequence TAE. An ATP-binding site is contributed by 271-273; sequence RSE. Glu294 is a binding site for L-serine. 358 to 361 contacts ATP; sequence EISS. Ser393 is a binding site for L-serine.

It belongs to the class-II aminoacyl-tRNA synthetase family. Type-1 seryl-tRNA synthetase subfamily. In terms of assembly, homodimer. The tRNA molecule binds across the dimer.

Its subcellular location is the cytoplasm. It carries out the reaction tRNA(Ser) + L-serine + ATP = L-seryl-tRNA(Ser) + AMP + diphosphate + H(+). The enzyme catalyses tRNA(Sec) + L-serine + ATP = L-seryl-tRNA(Sec) + AMP + diphosphate + H(+). It participates in aminoacyl-tRNA biosynthesis; selenocysteinyl-tRNA(Sec) biosynthesis; L-seryl-tRNA(Sec) from L-serine and tRNA(Sec): step 1/1. Catalyzes the attachment of serine to tRNA(Ser). Is also able to aminoacylate tRNA(Sec) with serine, to form the misacylated tRNA L-seryl-tRNA(Sec), which will be further converted into selenocysteinyl-tRNA(Sec). The sequence is that of Serine--tRNA ligase from Cupriavidus metallidurans (strain ATCC 43123 / DSM 2839 / NBRC 102507 / CH34) (Ralstonia metallidurans).